The primary structure comprises 332 residues: L-lactate dehydrogenase A chain (332 aa).

The residue at position 2 (A2) is an N-acetylalanine. An N6-acetyllysine; alternate modification is found at K5. K5 bears the N6-succinyllysine; alternate mark. An N6-acetyllysine modification is found at K14. 29 to 57 (GAVGMACAISILMKDLADELALVDVIEDK) serves as a coordination point for NAD(+). K57 is modified (N6-acetyllysine; alternate). K57 participates in a covalent cross-link: Glycyl lysine isopeptide (Lys-Gly) (interchain with G-Cter in SUMO2); alternate. K81 is subject to N6-acetyllysine. R99 is an NAD(+) binding site. Substrate is bound at residue R106. Residue K118 is modified to N6-acetyllysine; alternate. An N6-succinyllysine; alternate modification is found at K118. K126 carries the N6-acetyllysine modification. N138 provides a ligand contact to NAD(+). Substrate is bound by residues N138 and R169. H193 acts as the Proton acceptor in catalysis. Phosphoserine is present on S213. N6-acetyllysine is present on residues K224 and K232. Position 239 is a phosphotyrosine (Y239). Position 243 is an N6-acetyllysine (K243). A substrate-binding site is contributed by T248. T309 carries the phosphothreonine modification. At K318 the chain carries N6-acetyllysine; alternate. K318 bears the N6-succinyllysine; alternate mark. At T322 the chain carries Phosphothreonine.

This sequence belongs to the LDH/MDH superfamily. LDH family. Homotetramer. Interacts with PTEN upstream reading frame protein MP31. In terms of processing, ISGylated.

The protein localises to the cytoplasm. The enzyme catalyses (S)-lactate + NAD(+) = pyruvate + NADH + H(+). It participates in fermentation; pyruvate fermentation to lactate; (S)-lactate from pyruvate: step 1/1. Functionally, interconverts simultaneously and stereospecifically pyruvate and lactate with concomitant interconversion of NADH and NAD(+). The protein is L-lactate dehydrogenase A chain (Ldha) of Rattus norvegicus (Rat).